A 509-amino-acid chain; its full sequence is Bifunctional pantoate ligase/cytidylate kinase (509 aa).

Residues 1-275 (MKKLIIRKTE…CGETRLIDHV (275 aa)) are pantoate--beta-alanine ligase. 29 to 36 (MGNLHDGH) serves as a coordination point for ATP. H36 serves as the catalytic Proton donor. A (R)-pantoate-binding site is contributed by Q61. Q61 serves as a coordination point for beta-alanine. 149–152 (GEKD) is an ATP binding site. Q155 lines the (R)-pantoate pocket. Residue 186–189 (LSSR) participates in ATP binding. A cytidylate kinase region spans residues 276–509 (FLMKRRPIIA…DKIPKESEIK (234 aa)).

In the N-terminal section; belongs to the pantothenate synthetase family. It in the C-terminal section; belongs to the cytidylate kinase family. Type 1 subfamily.

It localises to the cytoplasm. It catalyses the reaction (R)-pantoate + beta-alanine + ATP = (R)-pantothenate + AMP + diphosphate + H(+). It carries out the reaction CMP + ATP = CDP + ADP. The catalysed reaction is dCMP + ATP = dCDP + ADP. Its pathway is cofactor biosynthesis; (R)-pantothenate biosynthesis; (R)-pantothenate from (R)-pantoate and beta-alanine: step 1/1. Catalyzes the condensation of pantoate with beta-alanine in an ATP-dependent reaction via a pantoyl-adenylate intermediate. Functionally, catalyzes the transfer of a phosphate group from ATP to either CMP or dCMP to form CDP or dCDP and ADP, respectively. This is Bifunctional pantoate ligase/cytidylate kinase from Prochlorococcus marinus (strain AS9601).